Consider the following 290-residue polypeptide: Elongation factor Ts (290 aa).

The interval 82–85 (TDFV) is involved in Mg(2+) ion dislocation from EF-Tu.

The protein belongs to the EF-Ts family.

It is found in the cytoplasm. Functionally, associates with the EF-Tu.GDP complex and induces the exchange of GDP to GTP. It remains bound to the aminoacyl-tRNA.EF-Tu.GTP complex up to the GTP hydrolysis stage on the ribosome. This is Elongation factor Ts from Thiobacillus denitrificans (strain ATCC 25259 / T1).